We begin with the raw amino-acid sequence, 64 residues long: Carnocyclin-A (64 aa).

A propeptide spanning residues M1–E4 is cleaved from the precursor. The cyclopeptide (Leu-Leu) cross-link spans L5–L64.

The protein resides in the secreted. Its function is as follows. Cyclopeptide antibiotic that inhibits the growth of Gram-positive bacteria, but has no effect on the growth of Gram-negative bacteria. The polypeptide is Carnocyclin-A (Carnobacterium maltaromaticum (Carnobacterium piscicola)).